Here is a 75-residue protein sequence, read N- to C-terminus: Conotoxin TsMEKL-011 (75 aa).

The N-terminal stretch at Met1–Ala19 is a signal peptide. A propeptide spanning residues Leu20–Arg45 is cleaved from the precursor. 3 disulfides stabilise this stretch: Cys49-Cys63, Cys56-Cys67, and Cys62-Cys71.

Belongs to the conotoxin O2 superfamily. As to expression, expressed by the venom duct.

The protein localises to the secreted. The polypeptide is Conotoxin TsMEKL-011 (Conus tessulatus (Tessellate cone)).